The primary structure comprises 412 residues: Potassium channel, subfamily K, member 13 (412 aa).

Over methionine 1–arginine 21 the chain is Cytoplasmic. The helical transmembrane segment at phenylalanine 22–alanine 42 threads the bilayer. An intramembrane region (pore-forming) is located at residues tryptophan 97–methionine 117. Threonine 112, isoleucine 113, and glycine 114 together coordinate K(+). The selectivity filter 1 stretch occupies residues threonine 112–methionine 117. Residues isoleucine 127–phenylalanine 147 form a helical membrane-spanning segment. Over leucine 148 to serine 198 the chain is Cytoplasmic. A helical membrane pass occupies residues valine 199–alanine 219. The pore-forming intramembrane region spans tyrosine 229–valine 249. K(+) contacts are provided by threonine 242, isoleucine 243, glycine 244, and phenylalanine 245. The tract at residues threonine 242 to aspartate 247 is selectivity filter 2. Residues leucine 268 to isoleucine 288 traverse the membrane as a helical segment. The Cytoplasmic portion of the chain corresponds to lysine 289–arginine 412. Residues methionine 374–serine 386 show a composition bias toward polar residues. Residues methionine 374–valine 395 form a disordered region.

It belongs to the two pore domain potassium channel (TC 1.A.1.8) family. As to quaternary structure, homodimer. Heterodimer. Brain and heart.

The protein localises to the cell membrane. The enzyme catalyses K(+)(in) = K(+)(out). Its activity is regulated as follows. The channel conductance is activated by arachidonic acid and inhibited by Ba(2+) ions, volatile anesthetics such as halothane and antiarrhythmic drug mexiletine. Insensitive to extracellular pH change. K(+) channel that conducts outward rectifying tonic currents potentiated by purinergic signals. Homo- and heterodimerizes to form functional channels with distinct regulatory and gating properties. Contributes most of K(+) currents at the plasma membrane of resting microglia. Maintains a depolarized membrane potential required for proper ramified microglia morphology and phagocytosis, selectively mediating microglial pruning of presynaptic compartments at hippocampal excitatory synapses. Upon local release of ATP caused by neuronal injury or infection, it is potentiated by purinergic signaling and contributes to ATP-triggered K(+) efflux underlying microglial NLRP3 inflammasome assembly and IL1B release. This chain is Potassium channel, subfamily K, member 13, found in Danio rerio (Zebrafish).